The following is a 661-amino-acid chain: Solute carrier organic anion transporter family member 1A4 (661 aa).

Residues 1 to 20 (MGKSEKRVATHGVRCFAKIK) are Cytoplasmic-facing. The helical transmembrane segment at 21–40 (MFLLALTCAYVSKSLSGTYM) threads the bilayer. The Extracellular portion of the chain corresponds to 41–59 (NSMLTQIERQFGIPTSIVG). Residues 60–80 (LINGSFEIGNLLLIIFVSYFG) traverse the membrane as a helical segment. Residues 81–86 (TKLHRP) are Cytoplasmic-facing. The chain crosses the membrane as a helical span at residues 87–111 (IMIGVGCAVMGLGCFLISLPHFLMG). The Extracellular segment spans residues 112–154 (QYEYETILPTSNVSSNSFFCVENRSQTLNPTQDPSECVKEMKS). 2 N-linked (GlcNAc...) asparagine glycosylation sites follow: N123 and N134. A helical transmembrane segment spans residues 155–183 (LMWIYVLVGNIIRGIGETPIMPLGISYIE). Residues 184-202 (DFAKSENSPLYIGILETGM) lie on the Cytoplasmic side of the membrane. A helical transmembrane segment spans residues 203-223 (TIGPLIGLLLASSCANIYVDI). Residues 224–241 (ESVNTDDLTITPTDTRWV) lie on the Extracellular side of the membrane. The chain crosses the membrane as a helical span at residues 242–266 (GAWWIGFLVCAGVNILTSFPFFFFP). Over 267-310 (KTLPKEGLQENVDGTENAKEKKHRKKAKEEKRGITKDFFVFMKS) the chain is Cytoplasmic. A helical membrane pass occupies residues 311–332 (LSCNPIYMLFILISVLQFNAFI). Residues 333 to 352 (NSFTFMPKYLEQQYGKSTAE) are Extracellular-facing. A helical membrane pass occupies residues 353–376 (VVFLMGLYMLPPICLGYLIGGLIM). At 377–380 (KKFK) the chain is on the cytoplasmic side. The helical transmembrane segment at 381–404 (VTVKKAAHLAFWLCLSEYLLSFLS) threads the bilayer. Over 405 to 512 (YVMTCDNFPV…PDCANKLQYF (108 aa)) the chain is Extracellular. The Kazal-like domain maps to 432–487 (NKVLADCNTRCNCSTNTWDPVCGDNGLAYMSACLAGCEKSVGTGTNMVFQNCSCIQ). 3 disulfides stabilise this stretch: C438–C468, C444–C464, and C453–C485. N443 carries an N-linked (GlcNAc...) asparagine glycan. Residues N482 and N491 are each glycosylated (N-linked (GlcNAc...) asparagine). Residues 513-535 (LIIAIFGCFIYSLAGIPGYMVLL) traverse the membrane as a helical segment. Residues 536-544 (RCIKSEEKS) are Cytoplasmic-facing. The helical transmembrane segment at 545–570 (LGVGLHAFCIRILAGIPAPIYFGALI) threads the bilayer. Residues 571 to 604 (DRTCLHWGTLKCGEPGACRMYDINSFRRLYLGLP) lie on the Extracellular side of the membrane. The chain crosses the membrane as a helical span at residues 605 to 622 (AALRGASFVPAFFILRLT). The Cytoplasmic segment spans residues 623–661 (RTFQFPGDIESSKTDHAEMKLTLKESECTEVLRSKVTED). A phosphoserine mark is found at S633 and S634.

The protein belongs to the organo anion transporter (TC 2.A.60) family. As to expression, highly expressed in brain, liver, and kidney but not expressed in heart, spleen, lung, skeletal muscle, and testis.

The protein localises to the cell membrane. The catalysed reaction is estrone 3-sulfate(out) = estrone 3-sulfate(in). It carries out the reaction taurocholate(out) = taurocholate(in). The enzyme catalyses prostaglandin E2(out) = prostaglandin E2(in). It catalyses the reaction L-thyroxine(out) = L-thyroxine(in). Functionally, mediates the Na(+)-independent transport of organic anions such as taurocholate, cholate, 17-beta-glucuronosyl estradiol, prostaglandin E2, estrone 3-sulfate, L-thyroxine (T4), the cardiac glycosides ouabain and digoxin and thyroid hormones. May play an especially important role in the brain accumulation and toxicity of digoxin and in the hepatobiliary and renal excretion of cardiac glycosides. Shows a pH-sensitive substrate specificity which may be ascribed to the protonation state of the binding site and leads to a stimulation of substrate transport in an acidic microenvironment. Hydrogencarbonate/HCO3(-) acts as the probable counteranion that exchanges for organic anions. The polypeptide is Solute carrier organic anion transporter family member 1A4 (Slco1a4) (Rattus norvegicus (Rat)).